A 122-amino-acid chain; its full sequence is Large ribosomal subunit protein uL14 (122 aa).

This sequence belongs to the universal ribosomal protein uL14 family. As to quaternary structure, part of the 50S ribosomal subunit. Forms a cluster with proteins L3 and L19. In the 70S ribosome, L14 and L19 interact and together make contacts with the 16S rRNA in bridges B5 and B8.

Binds to 23S rRNA. Forms part of two intersubunit bridges in the 70S ribosome. In Pseudothermotoga lettingae (strain ATCC BAA-301 / DSM 14385 / NBRC 107922 / TMO) (Thermotoga lettingae), this protein is Large ribosomal subunit protein uL14.